Here is a 578-residue protein sequence, read N- to C-terminus: Probable methylcrotonoyl-CoA carboxylase beta chain, mitochondrial (578 aa).

A mitochondrion-targeting transit peptide spans 1–29 (MIRLNWLFRSSSVLLRSQVRLLHVGDANV). One can recognise a CoA carboxyltransferase N-terminal domain in the interval 48-305 (MASLVGDLRN…SATNSYNDQL (258 aa)). The interval 48-570 (MASLVGDLRN…KAALNNAGQE (523 aa)) is carboxyltransferase. Positions 321-570 (AVEEPRYDAE…KAALNNAGQE (250 aa)) constitute a CoA carboxyltransferase C-terminal domain. The segment at 355 to 388 (DGSRFTEFKKLYGETLVCGFAKLYGHTVGIVGNN) is acyl-CoA binding.

It belongs to the AccD/PCCB family. In terms of tissue distribution, expressed in third instar larval ring gland (lateral and medial secretory cells and corpus cardiacum cells) and CNS.

Its subcellular location is the mitochondrion matrix. It catalyses the reaction 3-methylbut-2-enoyl-CoA + hydrogencarbonate + ATP = 3-methyl-(2E)-glutaconyl-CoA + ADP + phosphate + H(+). It functions in the pathway amino-acid degradation; L-leucine degradation; (S)-3-hydroxy-3-methylglutaryl-CoA from 3-isovaleryl-CoA: step 2/3. In terms of biological role, carboxyltransferase subunit of the 3-methylcrotonyl-CoA carboxylase, an enzyme that catalyzes the conversion of 3-methylcrotonyl-CoA to 3-methylglutaconyl-CoA, a critical step for leucine and isovaleric acid catabolism. Vital for adult survival. In Drosophila melanogaster (Fruit fly), this protein is Probable methylcrotonoyl-CoA carboxylase beta chain, mitochondrial.